The sequence spans 543 residues: CTP synthase (543 aa).

The segment at 1 to 265 (MTRYIFVTGG…DDIVVERFGL (265 aa)) is amidoligase domain. Ser-13 provides a ligand contact to CTP. Ser-13 contributes to the UTP binding site. ATP is bound by residues 14–19 (SLGKGI) and Asp-71. Residues Asp-71 and Glu-139 each contribute to the Mg(2+) site. CTP contacts are provided by residues 146-148 (DIE), 186-191 (KTKPTQ), and Lys-222. Residues 186–191 (KTKPTQ) and Lys-222 contribute to the UTP site. The Glutamine amidotransferase type-1 domain maps to 290-541 (TIAMVGKYME…VNAALAQKAR (252 aa)). L-glutamine is bound at residue Gly-351. Cys-378 serves as the catalytic Nucleophile; for glutamine hydrolysis. L-glutamine contacts are provided by residues 379–382 (LGMQ), Glu-402, and Arg-469. Active-site residues include His-514 and Glu-516.

The protein belongs to the CTP synthase family. In terms of assembly, homotetramer.

It carries out the reaction UTP + L-glutamine + ATP + H2O = CTP + L-glutamate + ADP + phosphate + 2 H(+). The catalysed reaction is L-glutamine + H2O = L-glutamate + NH4(+). The enzyme catalyses UTP + NH4(+) + ATP = CTP + ADP + phosphate + 2 H(+). It participates in pyrimidine metabolism; CTP biosynthesis via de novo pathway; CTP from UDP: step 2/2. Allosterically activated by GTP, when glutamine is the substrate; GTP has no effect on the reaction when ammonia is the substrate. The allosteric effector GTP functions by stabilizing the protein conformation that binds the tetrahedral intermediate(s) formed during glutamine hydrolysis. Inhibited by the product CTP, via allosteric rather than competitive inhibition. Catalyzes the ATP-dependent amination of UTP to CTP with either L-glutamine or ammonia as the source of nitrogen. Regulates intracellular CTP levels through interactions with the four ribonucleotide triphosphates. This Azotobacter vinelandii (strain DJ / ATCC BAA-1303) protein is CTP synthase.